A 506-amino-acid polypeptide reads, in one-letter code: ATP synthase subunit alpha, plastid (506 aa).

Position 170–177 (G170–T177) interacts with ATP.

It belongs to the ATPase alpha/beta chains family. F-type ATPases have 2 components, CF(1) - the catalytic core - and CF(0) - the membrane proton channel. CF(1) has five subunits: alpha(3), beta(3), gamma(1), delta(1), epsilon(1). CF(0) has four main subunits: a, b, b' and c.

The protein localises to the plastid membrane. It catalyses the reaction ATP + H2O + 4 H(+)(in) = ADP + phosphate + 5 H(+)(out). Produces ATP from ADP in the presence of a proton gradient across the membrane. The alpha chain is a regulatory subunit. This Prototheca wickerhamii protein is ATP synthase subunit alpha, plastid.